The primary structure comprises 731 residues: Inducible ornithine decarboxylase (731 aa).

At K356 the chain carries N6-(pyridoxal phosphate)lysine.

This sequence belongs to the Orn/Lys/Arg decarboxylase class-I family. In terms of assembly, dodecamer. Pyridoxal 5'-phosphate is required as a cofactor.

It catalyses the reaction L-ornithine + H(+) = putrescine + CO2. The chain is Inducible ornithine decarboxylase (odcI) from Lactobacillus sp. (strain 30a).